We begin with the raw amino-acid sequence, 443 residues long: Exodeoxyribonuclease 7 large subunit (443 aa).

It belongs to the XseA family. In terms of assembly, heterooligomer composed of large and small subunits.

The protein resides in the cytoplasm. It carries out the reaction Exonucleolytic cleavage in either 5'- to 3'- or 3'- to 5'-direction to yield nucleoside 5'-phosphates.. In terms of biological role, bidirectionally degrades single-stranded DNA into large acid-insoluble oligonucleotides, which are then degraded further into small acid-soluble oligonucleotides. The protein is Exodeoxyribonuclease 7 large subunit of Stenotrophomonas maltophilia (strain R551-3).